The primary structure comprises 623 residues: AFI1-like protein C776.06c (623 aa).

Residues 5 to 204 form the uDENN domain; that stretch reads DYLLTAIFDP…IDNIPKPGSE (200 aa). A cDENN domain is found at 248–386; the sequence is ISNLINTFID…SDATTTMDTK (139 aa). A dDENN domain is found at 388-476; the sequence is LFNNTSPFTP…WSWDNDDEKV (89 aa).

It belongs to the AFI1/mesA family.

Its subcellular location is the cytoplasm. The protein localises to the cell cortex. It is found in the nucleus. Its function is as follows. Involved in polarity establishment. This Schizosaccharomyces pombe (strain 972 / ATCC 24843) (Fission yeast) protein is AFI1-like protein C776.06c.